We begin with the raw amino-acid sequence, 58 residues long: uncharacterized protein (58 aa).

Residues V12–I32 traverse the membrane as a helical segment.

The protein resides in the cell membrane. This is an uncharacterized protein from Bacillus subtilis (strain 168).